The chain runs to 209 residues: Abscisic acid receptor PYL3 (209 aa).

The tract at residues 1-23 (MNLAPIHDPSSSSTTTTSSSTPY) is disordered. Low complexity predominate over residues 10-21 (SSSSTTTTSSST). An START-like region spans residues 43 to 205 (FPRSPNTCTS…NLQNLAVIST (163 aa)). Residues lysine 79, 113 to 118 (ASTSVE), 140 to 146 (RLNNYRS), and glutamate 170 each bind abscisate. Positions 109-113 (SGLPA) match the Gate loop motif. The Latch loop motif lies at 139 to 141 (HRL).

It belongs to the PYR/PYL/RCAR abscisic acid intracellular receptor family. In terms of assembly, homodimer and monomer. Binds ABA on one subunit only. ABA-binding favors monomer and trans-homodimer intermediate, and increases PP2C inhibitor activity. Binds both (-)-ABA and (+)-ABA. Binds to CARs protein in an ABA-independent manner, both at the plasma membrane and in the nucleus. Interacts with HAB1, ABI1 and ABI2, and possibly with other PP2Cs.

The protein resides in the cytoplasm. Its subcellular location is the nucleus. The protein localises to the cell membrane. Functionally, receptor for abscisic acid (ABA) required for ABA-mediated responses such as stomatal closure and germination inhibition. Inhibits the activity of group-A protein phosphatases type 2C (PP2Cs) when activated by ABA. Can be activated by both (-)-ABA and (+)-ABA. The polypeptide is Abscisic acid receptor PYL3 (PYL3) (Arabidopsis thaliana (Mouse-ear cress)).